A 173-amino-acid chain; its full sequence is NADH-ubiquinone oxidoreductase chain 6 (173 aa).

A run of 4 helical transmembrane segments spans residues 24 to 44 (MSIM…TGTM), 49 to 69 (WLSY…FIYI), 80 to 100 (IKIN…TLMY), and 139 to 159 (PTVI…LAVV).

It belongs to the complex I subunit 6 family.

It is found in the mitochondrion membrane. It catalyses the reaction a ubiquinone + NADH + 5 H(+)(in) = a ubiquinol + NAD(+) + 4 H(+)(out). Its function is as follows. Core subunit of the mitochondrial membrane respiratory chain NADH dehydrogenase (Complex I) that is believed to belong to the minimal assembly required for catalysis. Complex I functions in the transfer of electrons from NADH to the respiratory chain. The immediate electron acceptor for the enzyme is believed to be ubiquinone. This Locusta migratoria (Migratory locust) protein is NADH-ubiquinone oxidoreductase chain 6 (ND6).